Reading from the N-terminus, the 146-residue chain is Fluoride-specific ion channel FluC (146 aa).

4 helical membrane passes run 8–28 (FAIA…TLTV), 47–67 (LANL…QALV), 91–111 (IGVL…AVFA), and 121–141 (MLLG…AAVV). Residues Gly-95 and Thr-98 each coordinate Na(+).

The protein belongs to the fluoride channel Fluc/FEX (TC 1.A.43) family.

It localises to the cell inner membrane. The catalysed reaction is fluoride(in) = fluoride(out). Its activity is regulated as follows. Na(+) is not transported, but it plays an essential structural role and its presence is essential for fluoride channel function. In terms of biological role, fluoride-specific ion channel. Important for reducing fluoride concentration in the cell, thus reducing its toxicity. In Rhodopirellula baltica (strain DSM 10527 / NCIMB 13988 / SH1), this protein is Fluoride-specific ion channel FluC.